Here is a 433-residue protein sequence, read N- to C-terminus: Protein arginine N-methyltransferase 2 (433 aa).

Residues 1–20 (MATSGDCPRSESQGEEPAEC) form a disordered region. Interaction with ESR1 regions lie at residues 1-277 (MATS…SALK) and 133-275 (KESL…NLSA). The SH3 domain maps to 30–89 (VQPEEFVAIADYAATDETQLSFLRGEKILILRQTTADWWWGERAGCCGYIPANHVGKHVD). An asymmetric dimethylarginine mark is found at Arg-61 and Arg-72. The interval 83-207 (HVGKHVDEYD…DVVLPEKVDV (125 aa)) is interaction with RB1. The 334-residue stretch at 99-432 (DEEYFGSYGT…KVGEKVFPIW (334 aa)) folds into the SAM-dependent MTase PRMT-type domain. Residues His-112, Arg-121, Gly-145, Glu-168, and Glu-197 each contribute to the S-adenosyl-L-methionine site. Active-site residues include Glu-211 and Glu-220.

This sequence belongs to the class I-like SAM-binding methyltransferase superfamily. Protein arginine N-methyltransferase family. Self-associates. Interacts with RB1 and E2F1. Interacts with NCOA6 coactivator. Interacts (via SH3 domain) with PRMT8. Interacts with AR. Interacts with NFKBIA. Interacts with ESR1, ESR2, PGR, PPARG, RARA, RXRA and THRB. Interacts with HNRNPUL1. In terms of tissue distribution, widely expressed. Highly expressed in androgen target organs such as heart, prostate, skeletal muscle, ovary and spinal cord.

The protein resides in the cytoplasm. It is found in the nucleus. Its subcellular location is the nucleolus. The enzyme catalyses L-arginyl-[protein] + 2 S-adenosyl-L-methionine = N(omega),N(omega)-dimethyl-L-arginyl-[protein] + 2 S-adenosyl-L-homocysteine + 2 H(+). Its function is as follows. Arginine methyltransferase that methylates the guanidino nitrogens of arginyl residues in proteins such as STAT3, FBL, histone H4. Acts as a coactivator (with NCOA2) of the androgen receptor (AR)-mediated transactivation. Acts as a coactivator (with estrogen) of estrogen receptor (ER)-mediated transactivation. Enhances PGR, PPARG, RARA-mediated transactivation. May inhibit NF-kappa-B transcription and promote apoptosis. Represses E2F1 transcriptional activity (in a RB1-dependent manner). May be involved in growth regulation. The protein is Protein arginine N-methyltransferase 2 (PRMT2) of Homo sapiens (Human).